The sequence spans 591 residues: V-type ATP synthase alpha chain (591 aa).

An ATP-binding site is contributed by 233–240; it reads GPFGAGKT.

This sequence belongs to the ATPase alpha/beta chains family.

The catalysed reaction is ATP + H2O + 4 H(+)(in) = ADP + phosphate + 5 H(+)(out). In terms of biological role, produces ATP from ADP in the presence of a proton gradient across the membrane. The V-type alpha chain is a catalytic subunit. This is V-type ATP synthase alpha chain from Streptococcus pyogenes serotype M28 (strain MGAS6180).